The primary structure comprises 234 residues: Uridylate kinase (234 aa).

10-11 (GS) contacts ATP. UMP is bound at residue glycine 44. Positions 45 and 49 each coordinate ATP. UMP contacts are provided by residues aspartate 66 and 114–120 (ITPAQTT). Threonine 140, tyrosine 146, and aspartate 149 together coordinate ATP.

It belongs to the UMP kinase family. Homohexamer.

It localises to the cytoplasm. The catalysed reaction is UMP + ATP = UDP + ADP. Its pathway is pyrimidine metabolism; CTP biosynthesis via de novo pathway; UDP from UMP (UMPK route): step 1/1. Its activity is regulated as follows. Inhibited by UTP. In terms of biological role, catalyzes the reversible phosphorylation of UMP to UDP. This Methanoculleus marisnigri (strain ATCC 35101 / DSM 1498 / JR1) protein is Uridylate kinase.